The following is a 452-amino-acid chain: Protein henna (452 aa).

Positions 36 to 107 (FSPKDSSLSS…EQCSYFNIIS (72 aa)) constitute an ACT domain. Position 272 is a phosphoserine; by CaMK2 (serine 272). Fe cation is bound by residues histidine 284, histidine 289, and glutamate 329.

Belongs to the biopterin-dependent aromatic amino acid hydroxylase family. Fe(2+) is required as a cofactor. Phenylalanine hydrolase activity is found in yolk granules of embryos, and female abdomen and fat body tissues. Tryptophan hydroxylase is expressed in serotonergic neurons. Both enzymes are present in cuticular tissues.

The catalysed reaction is (6R)-L-erythro-5,6,7,8-tetrahydrobiopterin + L-phenylalanine + O2 = (4aS,6R)-4a-hydroxy-L-erythro-5,6,7,8-tetrahydrobiopterin + L-tyrosine. It carries out the reaction (6R)-L-erythro-5,6,7,8-tetrahydrobiopterin + L-tryptophan + O2 = 5-hydroxy-L-tryptophan + (4aS,6R)-4a-hydroxy-L-erythro-5,6,7,8-tetrahydrobiopterin. It participates in amino-acid degradation; L-phenylalanine degradation; acetoacetate and fumarate from L-phenylalanine: step 1/6. N-terminal region of PAH is thought to contain allosteric binding sites for phenylalanine and to constitute an 'inhibitory' domain that regulates the activity of a catalytic domain in the C-terminal portion of the molecule. The polypeptide is Protein henna (Hn) (Drosophila melanogaster (Fruit fly)).